The following is a 512-amino-acid chain: 2,3-bisphosphoglycerate-independent phosphoglycerate mutase (512 aa).

Aspartate 11 and serine 61 together coordinate Mn(2+). Serine 61 (phosphoserine intermediate) is an active-site residue. Substrate is bound by residues histidine 122, 152–153 (RD), arginine 184, arginine 190, 259–262 (RADR), and lysine 332. Mn(2+) is bound by residues aspartate 399, histidine 403, aspartate 440, histidine 441, and histidine 459.

It belongs to the BPG-independent phosphoglycerate mutase family. Monomer. It depends on Mn(2+) as a cofactor.

It carries out the reaction (2R)-2-phosphoglycerate = (2R)-3-phosphoglycerate. The protein operates within carbohydrate degradation; glycolysis; pyruvate from D-glyceraldehyde 3-phosphate: step 3/5. Functionally, catalyzes the interconversion of 2-phosphoglycerate and 3-phosphoglycerate. In Francisella tularensis subsp. novicida (strain U112), this protein is 2,3-bisphosphoglycerate-independent phosphoglycerate mutase.